Reading from the N-terminus, the 257-residue chain is Protein IMPACT homolog (257 aa).

The RWD domain maps to 9–102; that stretch reads AEIESLASIF…SLVQDFIRDL (94 aa).

Belongs to the IMPACT family. As to quaternary structure, interacts with gcn-1; prevents the interaction of gcn-1 with gcn-2 and inhibits gcn-2 kinase activity. Interaction with rpl-39; this interaction occurs in a gcn-1-independent manner. Associates with ribosomes; this interaction occurs in a gcn-1-independent manner. Associates with actin; this interaction occurs in a gcn-1-independent manner.

It is found in the cytoplasm. Functionally, translational regulator that ensures constant high levels of translation under amino acid starvation. Plays a role as a negative regulator of the gcn-2 kinase activity; impairs gcn-1-mediated gcn-2 activation, and hence gcn-2-mediated eIF-2-alpha phosphorylation and subsequent down-regulation of protein synthesis in amino acid-starved cells. Plays a role in differentiation of neuronal cells by stimulating neurite outgrowth. The polypeptide is Protein IMPACT homolog (Caenorhabditis elegans).